Reading from the N-terminus, the 686-residue chain is Acyl-CoA synthetase short-chain family member 3, mitochondrial (686 aa).

Residues 1 to 29 constitute a mitochondrion transit peptide; that stretch reads MKPSWLQCRKVTGAGGLGGSLPASSPARG. 226–229 contributes to the CoA binding site; sequence EPGR. ATP is bound by residues 424–426 and 445–450; these read GER and DHWWQT. An N6-succinyllysine modification is found at lysine 517. An N6-acetyllysine modification is found at lysine 523. Residues aspartate 538, arginine 553, and arginine 564 each contribute to the ATP site. Arginine 623 provides a ligand contact to CoA.

Belongs to the ATP-dependent AMP-binding enzyme family.

It localises to the mitochondrion matrix. It catalyses the reaction acetate + ATP + CoA = acetyl-CoA + AMP + diphosphate. The enzyme catalyses propanoate + ATP + CoA = propanoyl-CoA + AMP + diphosphate. It carries out the reaction butanoate + ATP + CoA = butanoyl-CoA + AMP + diphosphate. Its function is as follows. Catalyzes the synthesis of acetyl-CoA from short-chain fatty acids. Propionate is the preferred substrate but can also utilize acetate and butyrate with a much lower affinity. This is Acyl-CoA synthetase short-chain family member 3, mitochondrial (ACSS3) from Bos taurus (Bovine).